Reading from the N-terminus, the 1515-residue chain is Metal resistance protein YCF1 (1515 aa).

Residues 1–32 lie on the Vacuolar side of the membrane; that stretch reads MAGNLVSWACKLCRSPEGFGPISFYGDFTQCF. Residues 33-53 traverse the membrane as a helical segment; it reads IDGVILNLSAIFMITFGIRDL. Residues 54-73 lie on the Cytoplasmic side of the membrane; it reads VNLCKKKHSGIKYRRNWIIV. The chain crosses the membrane as a helical span at residues 74-94; sequence SRMALVLLEIAFVSLASLNIS. The Vacuolar portion of the chain corresponds to 95–99; that stretch reads KEEAE. The chain crosses the membrane as a helical span at residues 100-120; it reads NFTIVSQYASTMLSLFVALAL. Residues 121–130 lie on the Cytoplasmic side of the membrane; sequence HWIEYDRSVV. A helical membrane pass occupies residues 131–151; sequence ANTVLLFYWLFETFGNFAKLI. Over 152-169 the chain is Vacuolar; it reads NILIRHTYEGIWYSGQTG. A helical transmembrane segment spans residues 170–190; it reads FILTLFQVITCASILLLEALP. At 191–278 the chain is on the cytoplasmic side; it reads KKPLMPHQHI…QKSNPSLSWA (88 aa). Phosphoserine is present on Ser-251. The chain crosses the membrane as a helical span at residues 279–299; that stretch reads ICRTFGSKMLLAAFFKAIHDV. The region spanning 287-590 is the ABC transmembrane type-1 1 domain; sequence MLLAAFFKAI…IPMVLNSFIE (304 aa). Over 300–345 the chain is Vacuolar; it reads LAFTQPQLLRILIKFVTDYNSERQDDHSSLQGFENNHPQKLPIVRG. Residues 346–366 traverse the membrane as a helical segment; it reads FLIAFAMFLVGFTQTSVLHQY. Residues 367–422 are Cytoplasmic-facing; that stretch reads FLNVFNTGMYIKSALTALIYQKSLVLSNEASGLSSTGDIVNLMSVDVQKLQDLTQW. The helical transmembrane segment at 423-443 threads the bilayer; it reads LNLIWSGPFQIIICLYSLYKL. Residues 444-446 are Vacuolar-facing; the sequence is LGN. Residues 447-467 traverse the membrane as a helical segment; it reads SMWVGVIILVIMMPLNSFLMR. Over 468 to 530 the chain is Cytoplasmic; sequence IQKKLQKSQM…NLTKLGCYMA (63 aa). The chain crosses the membrane as a helical span at residues 531-551; that stretch reads VTSFQFNIVPFLVSCCTFAVF. Residues 552–572 are Vacuolar-facing; that stretch reads VYTEDRALTTDLVFPALTLFN. Residues 573-593 traverse the membrane as a helical segment; the sequence is LLSFPLMIIPMVLNSFIEASV. Residues 594 to 943 are Cytoplasmic-facing; it reads SIGRLFTFFT…VKWNIYLEYA (350 aa). Residues 626-853 form the ABC transporter 1 domain; it reads INIGDDATFL…ADSPLWKLLN (228 aa). Residue 663–670 coordinates ATP; sequence GKVGSGKT. Phosphoserine is present on residues Ser-873, Ser-903, and Ser-908. Position 911 is a phosphothreonine (Thr-911). Ser-914 is subject to Phosphoserine. Residues 944–964 form a helical membrane-spanning segment; the sequence is KACNPKSVCVFILFIVISMFL. The 285-residue stretch at 951–1235 folds into the ABC transmembrane type-1 2 domain; it reads VCVFILFIVI…IVRMTVEVET (285 aa). Residues 965 to 1001 lie on the Vacuolar side of the membrane; it reads SVMGNVWLKHWSEVNSRYGSNPNAARYLAIYFALGIG. The helical transmembrane segment at 1002–1023 threads the bilayer; it reads SALATLIQTIVLWVFCTIHASK. At 1024–1066 the chain is on the cytoplasmic side; sequence YLHNLMTNSVLRAPMTFFETTPIGRILNRFSNDIYKVDALLGR. A helical transmembrane segment spans residues 1067–1087; it reads TFSQFFVNAVKVTFTITVICA. Thr-1088 is a topological domain (vacuolar). Residues 1089–1109 form a helical membrane-spanning segment; sequence TWQFIFIIIPLSVFYIYYQQY. The Cytoplasmic segment spans residues 1110-1180; sequence YLRTSRELRR…NANRWLAYRL (71 aa). Residues 1181–1201 form a helical membrane-spanning segment; the sequence is ELIGSIIILGAATLSVFRLKQ. Residues 1202–1205 are Vacuolar-facing; that stretch reads GTLT. Residues 1206–1226 form a helical membrane-spanning segment; the sequence is AGMVGLSLSYALQITQTLNWI. Residues 1227-1515 are Cytoplasmic-facing; the sequence is VRMTVEVETN…CMEAGLVNEN (289 aa). One can recognise an ABC transporter 2 domain in the interval 1272-1507; the sequence is IKFNNYSTRY…NKSLFYSLCM (236 aa). 1306–1313 provides a ligand contact to ATP; it reads GRTGAGKS.

This sequence belongs to the ABC transporter superfamily. ABCC family. Conjugate transporter (TC 3.A.1.208) subfamily.

It is found in the vacuole membrane. It catalyses the reaction Cd(2+)(in) + ATP + H2O = Cd(2+)(out) + ADP + phosphate + H(+). It carries out the reaction an S-substituted glutathione(in) + ATP + H2O = an S-substituted glutathione(out) + ADP + phosphate + H(+). Functionally, cooperates for the ATP-dependent vacuolar transport of bilirubin and glutathione conjugates. The sequence is that of Metal resistance protein YCF1 (YCF1) from Saccharomyces cerevisiae (strain ATCC 204508 / S288c) (Baker's yeast).